The chain runs to 496 residues: Beta-amylase (496 aa).

Residues D54, H94, and D102 each contribute to the substrate site. E187 functions as the Proton donor in the catalytic mechanism. Substrate is bound by residues K296, H301, and T343. The Proton acceptor role is filled by E381. Residues 382–383 (NA) and R421 each bind substrate. Residues 455 to 496 (YNHGIPPLKRSGPKIPDDVLNEATKPIPPFPWDSETDMKVDG) are disordered.

Belongs to the glycosyl hydrolase 14 family.

It catalyses the reaction Hydrolysis of (1-&gt;4)-alpha-D-glucosidic linkages in polysaccharides so as to remove successive maltose units from the non-reducing ends of the chains.. This Medicago sativa (Alfalfa) protein is Beta-amylase (BMY1).